A 174-amino-acid chain; its full sequence is Gamma-crystallin D (174 aa).

2 consecutive Beta/gamma crystallin 'Greek key' domains span residues 2–40 (GKITFYEDRGFQGRCYECSSDHVNLQSYFSRCNSIRVDS) and 41–83 (GCWM…RIIP). Residues 84–87 (YSGS) form a connecting peptide region. Beta/gamma crystallin 'Greek key' domains follow at residues 88 to 128 (HKMR…NVLD) and 129 to 171 (GCWI…RRVI).

This sequence belongs to the beta/gamma-crystallin family. In terms of assembly, monomer.

Functionally, crystallins are the dominant structural components of the vertebrate eye lens. In Macropus fuliginosus (Western gray kangaroo), this protein is Gamma-crystallin D (CRYGD).